The chain runs to 854 residues: N-terminal acetyltransferase A complex subunit NAT1 (854 aa).

At Ser2 the chain carries N-acetylserine. TPR repeat units lie at residues 20-53, 54-87, 91-124, 126-162, 241-274, 384-417, and 452-485; these read ENDQ…DGSH, VDSL…IEGA, PICC…GSTN, QIYR…RANW, FGLL…NPDN, IWTN…TPTL, and RFIN…DDSV. A coiled-coil region spans residues 623–667; that stretch reads LKRKSDSLDENSDEIQNNGQNSSSQKKKAKKEAAAMNKRKETEAK. The interval 626–668 is disordered; the sequence is KSDSLDENSDEIQNNGQNSSSQKKKAKKEAAAMNKRKETEAKS. At Ser674 the chain carries Phosphoserine. One copy of the TPR 8 repeat lies at 728 to 761; the sequence is ALCFASLNKFAKRFGTTSGLFGSMAIVLLHATRN.

Component of the N-terminal acetyltransferase A (NatA) complex, which is composed of ARD1, NAT1 and NAT5. Can self-associate. NAT1 associates with the nascent polypeptide chain and the ribosome. The N-terminus is blocked.

It is found in the cytoplasm. Non-catalytic component of the NatA N-terminal acetyltransferase, which catalyzes acetylation of proteins beginning with Met-Ser, Met-Gly and Met-Ala. N-acetylation plays a role in normal eukaryotic translation and processing, protect against proteolytic degradation and protein turnover. NAT1 anchors ARD1 and NAT5 to the ribosome and may present the N termini of nascent polypeptides for acetylation. This Saccharomyces cerevisiae (strain ATCC 204508 / S288c) (Baker's yeast) protein is N-terminal acetyltransferase A complex subunit NAT1 (NAT1).